Consider the following 447-residue polypeptide: MSLVDLGKRLLEAARKGQDDEVRTLMANGAPFTTDWLGTSPLHLAAQYGHYSTAEVLLRAGVSRDARTKVDRTPLHMAAADGHAHIVELLVRNGADVNAKDMLKMTALHWATEHHHRDVVELLIKYGADVHAFSKFDKSAFDIALEKNNAEILVILQEAMQNQVNANPERANPVTMATPFIFTSGEVVNLASLVSSASTKTTSGDPHASSTVHFSNSTTSVLATLAALAEASAPLSNSHRATANSEEIIEGNSVDSSIQQVVGSGGQRVITIVTDGIPLGNIQTAIPAGGIGQPFIVTVQDGQQVLTVPAGQVAEETVIEEEAEEAEKLPLTKKPRIEEMTNSVEESKEGTERELLQQRLQEANRRAQEYRHQLLKKEQEAEQYRLRLEAMARQQPNGVDFAMVEEVAEVDAVVVTEREMEERETEVTGAVGTAEPHTGVSMETVST.

5 ANK repeats span residues 5-34 (DLGK…PFTT), 37-66 (LGTS…SRDA), 70-99 (VDRT…DVNA), 103-132 (LKMT…DVHA), and 136-166 (FDKS…QVNA). A Phosphoserine modification is found at serine 253. A coiled-coil region spans residues 345–395 (EESKEGTERELLQQRLQEANRRAQEYRHQLLKKEQEAEQYRLRLEAMARQQ). The disordered stretch occupies residues 418 to 447 (REMEERETEVTGAVGTAEPHTGVSMETVST).

As to quaternary structure, heterotetramer of two alpha and two beta subunits. The C-terminal is necessary for the formation of a heterotetrameric GABP-alpha-2/beta-2 complex, and also facilitates homotypic dimerization. Interacts with ADGRB2.

It localises to the nucleus. Its function is as follows. May function as transcription factor capable of interacting with purine rich repeats (GA repeats). This Bos taurus (Bovine) protein is GA-binding protein subunit beta-2 (GABPB2).